Here is a 352-residue protein sequence, read N- to C-terminus: D-alanine--D-alanine ligase A (352 aa).

Positions 138 to 341 (KRMVQSAGLV…PPKLVGALVE (204 aa)) constitute an ATP-grasp domain. Residue 165–220 (ECLGSSTLFVKPATSGSSIGVSRVSNALEYAAAFAIAAREDTKVLVEAAVCGREIE) coordinates ATP. Positions 295, 308, and 310 each coordinate Mg(2+).

The protein belongs to the D-alanine--D-alanine ligase family. It depends on Mg(2+) as a cofactor. Mn(2+) is required as a cofactor.

It localises to the cytoplasm. It carries out the reaction 2 D-alanine + ATP = D-alanyl-D-alanine + ADP + phosphate + H(+). It functions in the pathway cell wall biogenesis; peptidoglycan biosynthesis. In terms of biological role, cell wall formation. This Pseudomonas putida (strain ATCC 47054 / DSM 6125 / CFBP 8728 / NCIMB 11950 / KT2440) protein is D-alanine--D-alanine ligase A.